The following is a 164-amino-acid chain: UBA-like domain-containing protein 2 (164 aa).

At Ser-2 the chain carries N-acetylserine. Residues Pro-144–Arg-164 are disordered.

Belongs to the UBALD family.

The chain is UBA-like domain-containing protein 2 (Ubald2) from Mus musculus (Mouse).